The primary structure comprises 257 residues: 3-deoxy-manno-octulosonate cytidylyltransferase (257 aa).

Belongs to the KdsB family.

It is found in the cytoplasm. It carries out the reaction 3-deoxy-alpha-D-manno-oct-2-ulosonate + CTP = CMP-3-deoxy-beta-D-manno-octulosonate + diphosphate. It functions in the pathway nucleotide-sugar biosynthesis; CMP-3-deoxy-D-manno-octulosonate biosynthesis; CMP-3-deoxy-D-manno-octulosonate from 3-deoxy-D-manno-octulosonate and CTP: step 1/1. The protein operates within bacterial outer membrane biogenesis; lipopolysaccharide biosynthesis. In terms of biological role, activates KDO (a required 8-carbon sugar) for incorporation into bacterial lipopolysaccharide in Gram-negative bacteria. This is 3-deoxy-manno-octulosonate cytidylyltransferase from Methylobacillus flagellatus (strain ATCC 51484 / DSM 6875 / VKM B-1610 / KT).